The primary structure comprises 100 residues: ATP-dependent Clp protease adapter protein ClpS (100 aa).

The protein belongs to the ClpS family. Binds to the N-terminal domain of the chaperone ClpA.

Its function is as follows. Involved in the modulation of the specificity of the ClpAP-mediated ATP-dependent protein degradation. The polypeptide is ATP-dependent Clp protease adapter protein ClpS (Nitratidesulfovibrio vulgaris (strain DSM 19637 / Miyazaki F) (Desulfovibrio vulgaris)).